The chain runs to 570 residues: Urease subunit alpha 1 (570 aa).

In terms of domain architecture, Urease spans 131 to 570 (GGIDTHVHFI…VPMAQRYFLF (440 aa)). 3 residues coordinate Ni(2+): H136, H138, and K219. The residue at position 219 (K219) is an N6-carboxylysine. H221 serves as a coordination point for substrate. 2 residues coordinate Ni(2+): H248 and H274. H322 functions as the Proton donor in the catalytic mechanism. D362 serves as a coordination point for Ni(2+).

Belongs to the metallo-dependent hydrolases superfamily. Urease alpha subunit family. Heterotrimer of UreA (gamma), UreB (beta) and UreC (alpha) subunits. Three heterotrimers associate to form the active enzyme. Ni cation is required as a cofactor. Post-translationally, carboxylation allows a single lysine to coordinate two nickel ions.

It is found in the cytoplasm. The catalysed reaction is urea + 2 H2O + H(+) = hydrogencarbonate + 2 NH4(+). It participates in nitrogen metabolism; urea degradation; CO(2) and NH(3) from urea (urease route): step 1/1. May protect brucellae during their passage through the stomach. The major route of infection in human brucellosis is oral. This is Urease subunit alpha 1 from Brucella abortus (strain 2308).